Here is a 149-residue protein sequence, read N- to C-terminus: Protein DOWN-REGULATED IN DIF1 11 (149 aa).

The signal sequence occupies residues 1-22 (MEKAILITFLIATTSMVYQTIG).

Mostly expressed in embryo sac cells. Restricted to synergid cells, especially in the filiform apparatus of mature female gametophyte, via MYB98-mediated transcription regulation. Also detected at low levels in egg and central cells.

In Arabidopsis thaliana (Mouse-ear cress), this protein is Protein DOWN-REGULATED IN DIF1 11.